The following is a 460-amino-acid chain: ATP synthase subunit beta (460 aa).

ATP is bound at residue 150–157 (GGAGVGKT).

Belongs to the ATPase alpha/beta chains family. In terms of assembly, F-type ATPases have 2 components, CF(1) - the catalytic core - and CF(0) - the membrane proton channel. CF(1) has five subunits: alpha(3), beta(3), gamma(1), delta(1), epsilon(1). CF(0) has three main subunits: a(1), b(2) and c(9-12). The alpha and beta chains form an alternating ring which encloses part of the gamma chain. CF(1) is attached to CF(0) by a central stalk formed by the gamma and epsilon chains, while a peripheral stalk is formed by the delta and b chains.

Its subcellular location is the cell inner membrane. The catalysed reaction is ATP + H2O + 4 H(+)(in) = ADP + phosphate + 5 H(+)(out). In terms of biological role, produces ATP from ADP in the presence of a proton gradient across the membrane. The catalytic sites are hosted primarily by the beta subunits. The sequence is that of ATP synthase subunit beta from Sodalis glossinidius (strain morsitans).